We begin with the raw amino-acid sequence, 433 residues long: Protein translocase subunit SecY (433 aa).

10 consecutive transmembrane segments (helical) span residues 17–37 (IIFTIFVLIICRFGSFIPIAG), 71–91 (IFALAIMPYITASIIIQLMSV), 117–137 (LTVLLASLQAYGVAVSLESIV), 141–161 (GPVVIIPGLFFKITTVITLVV), 184–204 (LIIFIGIISGVPSAIISMFEL), 212–232 (PLVAIAVCAGVVILISIIIFF), 268–288 (GVIPPIFASSILLFPATLANF), 309–329 (IYILLYVALIMFFSFFYTAIV), 366–386 (LTVVGGIYLSVICIIPELLMN), and 388–408 (YVISLSLGGTSFLIVVNVVLD).

The protein belongs to the SecY/SEC61-alpha family. Component of the Sec protein translocase complex. Heterotrimer consisting of SecY, SecE and SecG subunits. The heterotrimers can form oligomers, although 1 heterotrimer is thought to be able to translocate proteins. Interacts with the ribosome. Interacts with SecDF, and other proteins may be involved. Interacts with SecA.

It localises to the cell inner membrane. In terms of biological role, the central subunit of the protein translocation channel SecYEG. Consists of two halves formed by TMs 1-5 and 6-10. These two domains form a lateral gate at the front which open onto the bilayer between TMs 2 and 7, and are clamped together by SecE at the back. The channel is closed by both a pore ring composed of hydrophobic SecY resides and a short helix (helix 2A) on the extracellular side of the membrane which forms a plug. The plug probably moves laterally to allow the channel to open. The ring and the pore may move independently. The protein is Protein translocase subunit SecY of Rickettsia bellii (strain RML369-C).